The primary structure comprises 318 residues: Mitochondrial thiamine pyrophosphate carrier (318 aa).

Solcar repeat units lie at residues 13–106, 116–202, and 214–309; these read ISNV…LTEL, RDFS…LKRA, and NGNF…FCNF. Residues 19–39 form a helical membrane-spanning segment; the sequence is AVAGSVSGLVTRVLISPLDVI. A Phosphoserine modification is found at serine 51. A run of 4 helical transmembrane segments spans residues 87–107, 122–142, 173–193, and 220–240; these read LLSI…TELV, FLCG…VDVL, VFYK…GFQF, and LLCG…LDLF. A Substrate recognition motif is present at residues 241–246; that stretch reads KKRLQV. Residues 293 to 313 form a helical membrane-spanning segment; the sequence is ALSTGLVFFWYELFCNFFHHM.

The protein belongs to the mitochondrial carrier (TC 2.A.29) family.

The protein localises to the mitochondrion membrane. The catalysed reaction is thiamine phosphate(out) + thiamine diphosphate(in) = thiamine phosphate(in) + thiamine diphosphate(out). In terms of biological role, mitochondrial transporter mediating uptake of thiamine diphosphate into mitochondria. It is not clear if the antiporter activity is affected by the membrane potential or by the proton electrochemical gradient. The polypeptide is Mitochondrial thiamine pyrophosphate carrier (SLC25A19) (Bos taurus (Bovine)).